The primary structure comprises 317 residues: DNA repair nuclease/redox regulator APEX1 (317 aa).

The segment at 1 to 58 (MPKRGKKAAADDGEEPKSEPETKKSKGAAKKTEKEAAGEGPVLYEDPPDQKTSPSGKS) is disordered. A necessary for interaction with YBX1, binding to RNA, association together with NPM1 to rRNA, endoribonuclease activity on abasic RNA and localization in the nucleoli region spans residues 2–32 (PKRGKKAAADDGEEPKSEPETKKSKGAAKKT). An N6-acetyllysine; by EP300 mark is found at K6 and K7. The Nuclear localization signal (NLS) signature appears at 8 to 12 (AAADD). A compositionally biased stretch (basic and acidic residues) spans 15-37 (EPKSEPETKKSKGAAKKTEKEAA). The residue at position 18 (S18) is a Phosphoserine. The segment at 22–32 (TKKSKGAAKKT) is necessary for interaction with NPM1 and for efficient rRNA binding. N6-acetyllysine is present on residues K26, K30, K31, and K34. S53 carries the post-translational modification Phosphoserine. The short motif at 63–79 (ICSWNVDGLRAWIKKKG) is the Nuclear export signal (NES) element. S-nitrosocysteine; alternate is present on C64. A disulfide bridge links C64 with C92. D69 contributes to the Mg(2+) binding site. S-nitrosocysteine; alternate is present on C92. E95 contributes to the Mg(2+) binding site. The active site involves Y170. K196 carries the N6-acetyllysine modification. Residues D209 and N211 each contribute to the Mg(2+) site. D209 functions as the Proton donor/acceptor in the catalytic mechanism. Residue T232 is modified to Phosphothreonine; by CDK5. The mitochondrial targeting sequence (MTS) stretch occupies residues 288 to 317 (HSLLPALCDSKIRSKALGSDHCPITLYLAL). D307 provides a ligand contact to Mg(2+). S-nitrosocysteine is present on C309.

Belongs to the DNA repair enzymes AP/ExoA family. Monomer. Homodimer; disulfide-linked. Component of the SET complex, composed of at least APEX1, SET, ANP32A, HMGB2, NME1 and TREX1. Associates with the dimer XRCC5/XRCC6 in a DNA-dependent manner. Interacts with SIRT1; the interaction is increased in the context of genotoxic stress. Interacts with HDAC1, HDAC2 and HDAC3; the interactions are not dependent on the APEX1 acetylation status. Interacts with XRCC1; the interaction is induced by SIRT1 and increased with the APEX1 acetylated form. Interacts with NPM1 (via N-terminal domain); the interaction is RNA-dependent and decreases in hydrogen peroxide-damaged cells. Interacts (via N-terminus) with YBX1 (via C-terminus); the interaction is increased in presence of APEX1 acetylated at Lys-6 and Lys-7. Interacts with HNRNPL; the interaction is DNA-dependent. Interacts (via N-terminus) with KPNA1 and KPNA2. Interacts with TXN; the interaction stimulates the FOS/JUN AP-1 complex DNA-binding activity in a redox-dependent manner. Interacts with GZMA, KRT8, MDM2, POLB, PRDX6, PRPF19, RPLP0, TOMM20 and WDR77. Binds to CDK5. It depends on Mg(2+) as a cofactor. Mn(2+) is required as a cofactor. Post-translationally, phosphorylated. Phosphorylation by kinase PKC or casein kinase CK2 results in enhanced redox activity that stimulates binding of the FOS/JUN AP-1 complex to its cognate binding site. AP-endodeoxyribonuclease activity is not affected by CK2-mediated phosphorylation. Phosphorylation of Thr-232 by CDK5 in response to MPP(+)/MPTP (1-methyl-4-phenylpyridinium) reduces AP-endodeoxyribonuclease activity resulting in accumulation of DNA damage and contributing to neuronal death. In terms of processing, acetylated on Lys-6 and Lys-7. Acetylation is increased by the transcriptional coactivator EP300 acetyltransferase, genotoxic agents like H(2)O(2) and methyl methanesulfonate (MMS). Acetylation increases its binding affinity to the negative calcium response element (nCaRE) DNA promoter. The acetylated form induces a stronger binding of YBX1 to the Y-box sequence in the MDR1 promoter than the unacetylated form. Deacetylated on lysines. Lys-6 and Lys-7 are deacetylated by SIRT1. Cleaved at Lys-30 by granzyme A to create the mitochondrial form; leading in reduction of binding to DNA, AP endodeoxyribonuclease activity, redox activation of transcription factors and to enhanced cell death. Cleaved by granzyme K; leading to intracellular ROS accumulation and enhanced cell death after oxidative stress. Post-translationally, cys-64 and Cys-92 are nitrosylated in response to nitric oxide (NO) and lead to the exposure of the nuclear export signal (NES). In terms of processing, ubiquitinated by MDM2; leading to translocation to the cytoplasm and proteasomal degradation. As to expression, expressed in both resting and stimulated B cells stimulated to switch (at protein level).

Its subcellular location is the nucleus. The protein resides in the nucleolus. It localises to the nucleus speckle. The protein localises to the endoplasmic reticulum. It is found in the cytoplasm. Its subcellular location is the mitochondrion. It carries out the reaction a deoxyribonucleotide-2'-deoxyribose-5'-monophosphate-DNA + H2O = a 5'-end 2'-deoxyribose-5'-monophosphate-DNA + a 3'-end 2'-deoxyribonucleotide-DNA + H(+). It catalyses the reaction Exonucleolytic cleavage in the 3'- to 5'-direction to yield nucleoside 5'-phosphates.. The enzyme catalyses a 3'-end 2'-deoxyribonucleotide-3'-phosphoglycolate-DNA + H2O = 2-phosphoglycolate + a 3'-end 2'-deoxyribonucleotide-DNA + H(+). The catalysed reaction is a 3'-end 2'-deoxyribonucleotide-8-oxoguanine-DNA + H2O = 8-oxo-dGMP + a 3'-end 2'-deoxyribonucleotide-DNA + H(+). Its activity is regulated as follows. NPM1 stimulates endodeoxyribonuclease activity on double-stranded DNA with AP sites, but inhibits endoribonuclease activity on single-stranded RNA containing AP sites. Multifunctional protein that plays a central role in the cellular response to oxidative stress. The two major activities of APEX1 are DNA repair and redox regulation of transcriptional factors. Functions as an apurinic/apyrimidinic (AP) endodeoxyribonuclease in the base excision repair (BER) pathway of DNA lesions induced by oxidative and alkylating agents. Initiates repair of AP sites in DNA by catalyzing hydrolytic incision of the phosphodiester backbone immediately adjacent to the damage, generating a single-strand break with 5'-deoxyribose phosphate and 3'-hydroxyl ends. Also incises at AP sites in the DNA strand of DNA/RNA hybrids, single-stranded DNA regions of R-loop structures, and single-stranded RNA molecules. Operates at switch sites of immunoglobulin (Ig) constant regions where it mediates Ig isotype class switch recombination. Processes AP sites induced by successive action of AICDA and UNG. Generates staggered nicks in opposite DNA strands resulting in the formation of double-strand DNA breaks that are finally resolved via non-homologous end joining repair pathway. Has 3'-5' exodeoxyribonuclease activity on mismatched deoxyribonucleotides at the 3' termini of nicked or gapped DNA molecules during short-patch BER. Possesses DNA 3' phosphodiesterase activity capable of removing lesions (such as phosphoglycolate and 8-oxoguanine) blocking the 3' side of DNA strand breaks. Also acts as an endoribonuclease involved in the control of single-stranded RNA metabolism. Plays a role in regulating MYC mRNA turnover by preferentially cleaving in between UA and CA dinucleotides of the MYC coding region determinant (CRD). In association with NMD1, plays a role in the rRNA quality control process during cell cycle progression. Acts as a loading factor for POLB onto non-incised AP sites in DNA and stimulates the 5'-terminal deoxyribose 5'-phosphate (dRp) excision activity of POLB. Exerts reversible nuclear redox activity to regulate DNA binding affinity and transcriptional activity of transcriptional factors by controlling the redox status of their DNA-binding domain, such as the FOS/JUN AP-1 complex after exposure to IR. Involved in calcium-dependent down-regulation of parathyroid hormone (PTH) expression by binding to negative calcium response elements (nCaREs). Together with HNRNPL or the dimer XRCC5/XRCC6, associates with nCaRE, acting as an activator of transcriptional repression. May also play a role in the epigenetic regulation of gene expression by participating in DNA demethylation. Stimulates the YBX1-mediated MDR1 promoter activity, when acetylated at Lys-6 and Lys-7, leading to drug resistance. Plays a role in protection from granzyme-mediated cellular repair leading to cell death. Binds DNA and RNA. Associates, together with YBX1, on the MDR1 promoter. Together with NPM1, associates with rRNA. The sequence is that of DNA repair nuclease/redox regulator APEX1 (Apex1) from Mus musculus (Mouse).